Consider the following 160-residue polypeptide: Ureidoglycolate lyase (160 aa).

This sequence belongs to the ureidoglycolate lyase family. In terms of assembly, homodimer. Requires Ni(2+) as cofactor.

It carries out the reaction (S)-ureidoglycolate = urea + glyoxylate. It functions in the pathway nitrogen metabolism; (S)-allantoin degradation. Its function is as follows. Catalyzes the catabolism of the allantoin degradation intermediate (S)-ureidoglycolate, generating urea and glyoxylate. Involved in the anaerobic utilization of allantoin as sole nitrogen source. Reinforces the induction of genes involved in the degradation of allantoin and glyoxylate by producing glyoxylate. This chain is Ureidoglycolate lyase, found in Escherichia coli O6:H1 (strain CFT073 / ATCC 700928 / UPEC).